Consider the following 329-residue polypeptide: NTD biosynthesis operon regulator NtdR (329 aa).

In terms of domain architecture, HTH lacI-type spans 2–56 (PTIDEIAKLCNVSKTTVSRVLNNHPYVSKEKRDMILKAINELDYTPNYLARNFRR). Residues 4–23 (IDEIAKLCNVSKTTVSRVLN) constitute a DNA-binding region (H-T-H motif).

Its function is as follows. Positively regulates the ntdABC operon and negatively regulates its own transcription. Binds to NTD to induce ntdABC transcription. The protein is NTD biosynthesis operon regulator NtdR (ntdR) of Bacillus subtilis (strain 168).